The following is a 112-amino-acid chain: C-X-C motif chemokine 6 (112 aa).

The N-terminal stretch at 1 to 36 is a signal peptide; that stretch reads MRLLSSRAARVSGPSGSLCALLALLLLTPPGPLASA. Cystine bridges form between Cys48-Cys74 and Cys50-Cys90.

Belongs to the intercrine alpha (chemokine CxC) family.

It is found in the secreted. Chemotactic for neutrophil granulocytes. Signals through binding and activation of its receptors (CXCR1 and CXCR2). In addition to its chemotactic and angiogenic properties, it has strong antibacterial activity against Gram-positive and Gram-negative bacteria (90-fold-higher when compared to CXCL5 and CXCL7). The chain is C-X-C motif chemokine 6 (CXCL6) from Bos taurus (Bovine).